The following is a 244-amino-acid chain: tRNA pseudouridine synthase A (244 aa).

Residue Asp55 is the Nucleophile of the active site. Tyr113 contributes to the substrate binding site.

This sequence belongs to the tRNA pseudouridine synthase TruA family. In terms of assembly, homodimer.

The catalysed reaction is uridine(38/39/40) in tRNA = pseudouridine(38/39/40) in tRNA. Its function is as follows. Formation of pseudouridine at positions 38, 39 and 40 in the anticodon stem and loop of transfer RNAs. This chain is tRNA pseudouridine synthase A, found in Phytoplasma mali (strain AT).